We begin with the raw amino-acid sequence, 225 residues long: N-(5'-phosphoribosyl)anthranilate isomerase (225 aa).

It belongs to the TrpF family.

It catalyses the reaction N-(5-phospho-beta-D-ribosyl)anthranilate = 1-(2-carboxyphenylamino)-1-deoxy-D-ribulose 5-phosphate. It functions in the pathway amino-acid biosynthesis; L-tryptophan biosynthesis; L-tryptophan from chorismate: step 3/5. This chain is N-(5'-phosphoribosyl)anthranilate isomerase, found in Nitrobacter hamburgensis (strain DSM 10229 / NCIMB 13809 / X14).